The primary structure comprises 248 residues: Large ribosomal subunit protein uL30 (248 aa).

M1 is subject to N-acetylmethionine. 4 repeat units span residues 7 to 18 (KKKKVPAVPETL), 19 to 30 (KKKRKNFAELKI), 31 to 42 (KRLRKKFAQKML), and 43 to 54 (RKARRKLIYEKA). The tract at residues 7–54 (KKKKVPAVPETLKKKRKNFAELKIKRLRKKFAQKMLRKARRKLIYEKA) is 4 X 12 AA tandem repeats. T17 is subject to Phosphothreonine. The residue at position 124 (K124) is an N6-acetyllysine. An N6-succinyllysine modification is found at K127. Position 139 is a phosphotyrosine (Y139).

Belongs to the universal ribosomal protein uL30 family. As to quaternary structure, component of the large ribosomal subunit. Homodimer. Interacts with DHX33.

It is found in the cytoplasm. Its function is as follows. Component of the large ribosomal subunit. The ribosome is a large ribonucleoprotein complex responsible for the synthesis of proteins in the cell. Binds to G-rich structures in 28S rRNA and in mRNAs. Plays a regulatory role in the translation apparatus; inhibits cell-free translation of mRNAs. This is Large ribosomal subunit protein uL30 (RPL7) from Bos taurus (Bovine).